A 189-amino-acid polypeptide reads, in one-letter code: Ras-like protein 1 (189 aa).

10–17 serves as a coordination point for GTP; it reads GAGGVGKS. Residues 32-40 carry the Effector region motif; the sequence is YDPTIEDSY. Residues 57–61 and 116–119 contribute to the GTP site; these read DTAGQ and NKCD. Position 186 is a cysteine methyl ester (C186). C186 is lipidated: S-geranylgeranyl cysteine. The propeptide at 187-189 is removed in mature form; the sequence is KML.

This sequence belongs to the small GTPase superfamily. Ras family.

It is found in the cell membrane. It catalyses the reaction GTP + H2O = GDP + phosphate + H(+). With respect to regulation, alternates between an inactive form bound to GDP and an active form bound to GTP. Activated by a guanine nucleotide-exchange factor (GEF) and inactivated by a GTPase-activating protein (GAP). Its function is as follows. Ras proteins bind GDP/GTP and possess intrinsic GTPase activity. Plays a role in eye development by regulating cell growth, survival of postmitotic ommatidial cells and differentiation of photoreceptor cells. During larval development, mediates Ptth/tor signaling leading to the production of ecdysone, a hormone required for the initiation of metamorphosis. The protein is Ras-like protein 1 of Drosophila virilis (Fruit fly).